The primary structure comprises 100 residues: Large ribosomal subunit protein bL21 (100 aa).

The protein belongs to the bacterial ribosomal protein bL21 family. As to quaternary structure, part of the 50S ribosomal subunit. Contacts protein L20.

Its function is as follows. This protein binds to 23S rRNA in the presence of protein L20. This Wolbachia sp. subsp. Drosophila simulans (strain wRi) protein is Large ribosomal subunit protein bL21.